The chain runs to 483 residues: Regulatory protein ViaA (483 aa).

Belongs to the ViaA family. As to quaternary structure, homodimer. Interacts with RavA.

It localises to the cytoplasm. In terms of biological role, component of the RavA-ViaA chaperone complex, which may act on the membrane to optimize the function of some of the respiratory chains. ViaA stimulates the ATPase activity of RavA. This Salmonella choleraesuis (strain SC-B67) protein is Regulatory protein ViaA.